Consider the following 545-residue polypeptide: Tetrahydrocannabinolic acid synthase (545 aa).

The N-terminal stretch at 1-28 (MNCSAFSFWFVCKIIFFFLSFHIQISIA) is a signal peptide. A disulfide bond links Cys37 and Cys99. Residues Asn65 and Asn89 are each glycosylated (N-linked (GlcNAc...) asparagine). The FAD-binding PCMH-type domain maps to 77–251 (TTPKPLVIVT…AAWKIKLVAV (175 aa)). FAD contacts are provided by residues 109 to 115 (TRSGGHD) and Ser120. A cross-link (6-(S-cysteinyl)-8alpha-(pros-histidyl)-FAD (His-Cys)) is located at residues 114-176 (HDAEGMSYIS…ENLSFPGGYC (63 aa)). Asn168 carries an N-linked (GlcNAc...) asparagine glycan. FAD-binding positions include Cys176, 180–184 (GVGGH), Tyr190, Glu236, and Ile241. His292 is a binding site for cannabigerolate. N-linked (GlcNAc...) asparagine glycans are attached at residues Asn297, Asn305, and Asn329. Cannabigerolate is bound by residues Tyr417 and Glu442. Asn467 carries an N-linked (GlcNAc...) asparagine glycan. FAD is bound at residue 481–483 (YLN). Tyr484 (proton acceptor) is an active-site residue. N-linked (GlcNAc...) asparagine glycosylation is present at Asn499.

Belongs to the oxygen-dependent FAD-linked oxidoreductase family. In terms of assembly, monomer. FAD serves as cofactor. Glycosylated when produced in a heterologous system. The deglycosylated THCA synthase has more catalytic activity than the glycosylated form. In terms of processing, the FAD cofactor is bound via a bicovalent 6-S-cysteinyl, 8alpha-N1-histidyl FAD linkage. As to expression, expressed in the secretory cells of glandular trichomes.

It localises to the secreted. The protein resides in the extracellular space. The protein localises to the apoplast. The catalysed reaction is cannabigerolate + O2 = Delta(9)-tetrahydrocannabinolate + H2O2. The protein operates within secondary metabolite biosynthesis; terpenoid biosynthesis. With respect to regulation, inhibited by Hg(2+). Its function is as follows. Oxidoreductase involved in the biosynthesis of cannabinoids-related terpenophenolic natural products, which have pharmacological activity. Catalyzes the oxidative cyclization of the monoterpene moiety in cannabigerolic acid (CBGA), producing delta(9)-tetrahydrocannabinolate (THCA), the major cannabioid in drug-type Cannabis plants. Can also use cannabinerolic acid as substrate, but not cannabigerol or cannabinerol. The protein is Tetrahydrocannabinolic acid synthase of Cannabis sativa (Hemp).